A 422-amino-acid chain; its full sequence is Glutamyl-tRNA reductase (422 aa).

Residues 49–52, Ser-107, 112–114, and Gln-118 contribute to the substrate site; these read TCNR and EPQ. Cys-50 functions as the Nucleophile in the catalytic mechanism. Residue 187 to 192 participates in NADP(+) binding; it reads GAGETI.

This sequence belongs to the glutamyl-tRNA reductase family. Homodimer.

The enzyme catalyses (S)-4-amino-5-oxopentanoate + tRNA(Glu) + NADP(+) = L-glutamyl-tRNA(Glu) + NADPH + H(+). The protein operates within porphyrin-containing compound metabolism; protoporphyrin-IX biosynthesis; 5-aminolevulinate from L-glutamyl-tRNA(Glu): step 1/2. Catalyzes the NADPH-dependent reduction of glutamyl-tRNA(Glu) to glutamate 1-semialdehyde (GSA). In Pseudomonas aeruginosa (strain ATCC 15692 / DSM 22644 / CIP 104116 / JCM 14847 / LMG 12228 / 1C / PRS 101 / PAO1), this protein is Glutamyl-tRNA reductase.